Reading from the N-terminus, the 219-residue chain is Large ribosomal subunit protein uL3 (219 aa).

Residues 133 to 153 (GRASHGNSRSHNVPGSIGMAQ) are disordered. Glutamine 153 carries the N5-methylglutamine modification.

This sequence belongs to the universal ribosomal protein uL3 family. As to quaternary structure, part of the 50S ribosomal subunit. Forms a cluster with proteins L14 and L19. In terms of processing, methylated by PrmB.

In terms of biological role, one of the primary rRNA binding proteins, it binds directly near the 3'-end of the 23S rRNA, where it nucleates assembly of the 50S subunit. This is Large ribosomal subunit protein uL3 from Burkholderia mallei (strain NCTC 10247).